Consider the following 314-residue polypeptide: Oxalate oxidoreductase subunit beta (314 aa).

The [4Fe-4S] cluster site is built by Cys-24, Cys-27, Cys-52, and Cys-225.

As to quaternary structure, dimer of heterotrimer of one alpha, one beta and one delta subunit. Requires [4Fe-4S] cluster as cofactor.

It carries out the reaction oxidized 2[4Fe-4S]-[ferredoxin] + oxalate = reduced 2[4Fe-4S]-[ferredoxin] + 2 CO2. In terms of biological role, catalyzes the anaerobic oxidation of oxalate using a broad range of electron acceptors, including ferredoxin and the nickel-dependent carbon monoxide dehydrogenase. Does not require coenzyme A as cosubstrate. Enables anaerobic growth on oxalate which is used as energy source by the bacteria. The protein is Oxalate oxidoreductase subunit beta of Moorella thermoacetica (strain ATCC 39073 / JCM 9320).